The chain runs to 436 residues: Phosphoribosylamine--glycine ligase (436 aa).

One can recognise an ATP-grasp domain in the interval 106 to 318; sequence RKLFEDYRIP…MLEICEGIVD (213 aa). 133-196 lines the ATP pocket; it reads MEDFDSEAVV…EERVVGEEFT (64 aa). Mg(2+) is bound by residues Gln276, Glu288, and Asn290. Mn(2+) contacts are provided by Gln276, Glu288, and Asn290.

This sequence belongs to the GARS family. Requires Mg(2+) as cofactor. The cofactor is Mn(2+).

The catalysed reaction is 5-phospho-beta-D-ribosylamine + glycine + ATP = N(1)-(5-phospho-beta-D-ribosyl)glycinamide + ADP + phosphate + H(+). It functions in the pathway purine metabolism; IMP biosynthesis via de novo pathway; N(1)-(5-phospho-D-ribosyl)glycinamide from 5-phospho-alpha-D-ribose 1-diphosphate: step 2/2. This Methanothermobacter thermautotrophicus (strain ATCC 29096 / DSM 1053 / JCM 10044 / NBRC 100330 / Delta H) (Methanobacterium thermoautotrophicum) protein is Phosphoribosylamine--glycine ligase.